The chain runs to 362 residues: Large ribosomal subunit protein uL2m (362 aa).

A mitochondrion-targeting transit peptide spans 1–23 (MLSYNRFRGYLIPQIHALKLFRY). The segment at 306 to 362 (AMNPCDHPHGGGGGKSIGNKPSQSPWGVLAKGGYKTRRGKNVNKLLVRDRPRGKEKR) is disordered. Over residues 351-362 (LVRDRPRGKEKR) the composition is skewed to basic and acidic residues.

This sequence belongs to the universal ribosomal protein uL2 family. Component of the mitochondrial large ribosomal subunit (mt-LSU). Mature yeast 74S mitochondrial ribosomes consist of a small (37S) and a large (54S) subunit. The 37S small subunit contains a 15S ribosomal RNA (15S mt-rRNA) and at least 32 different proteins. The 54S large subunit contains a 21S rRNA (21S mt-rRNA) and at least 45 different proteins. uL2m has a Na/K ligand binding site.

It localises to the mitochondrion. Functionally, component of the mitochondrial ribosome (mitoribosome), a dedicated translation machinery responsible for the synthesis of mitochondrial genome-encoded proteins, including at least some of the essential transmembrane subunits of the mitochondrial respiratory chain. The mitoribosomes are attached to the mitochondrial inner membrane and translation products are cotranslationally integrated into the membrane. In Schizosaccharomyces pombe (strain 972 / ATCC 24843) (Fission yeast), this protein is Large ribosomal subunit protein uL2m (rml2).